Reading from the N-terminus, the 251-residue chain is DNA repair protein RecO (251 aa).

Belongs to the RecO family.

Functionally, involved in DNA repair and RecF pathway recombination. In Lactococcus lactis subsp. cremoris (strain MG1363), this protein is DNA repair protein RecO.